The primary structure comprises 391 residues: Multidrug resistance protein MdtL (391 aa).

Helical transmembrane passes span 4-24 (FLICSFALVLLYPAGIDMYLV), 42-62 (IAFSVYLAGMAAAMLFAGKVA), 69-89 (PVAIPGAALFIIASVFCSLAE), 93-113 (LFLAGRFLQGLGAGCCYVVAF), 131-151 (LLNGITCIIPVLAPVLGHLIM), 158-178 (SLFWTMATMGIAVLMLSLFIL), 203-222 (FFLSRVVITTLSVSVILTFV), 245-265 (ALTAGVSMTVSFSTPFALGIF), 269-289 (TLMITSQVLFLAAGITLAVSP), 293-313 (VSLFGITLICAGFSVGFGVAM), 331-351 (LGIAQVCGSSLWIWLAAVVGI), and 356-376 (MLIGILIACSIVSLLLIMFVA).

It belongs to the major facilitator superfamily. DHA1 family. MdtL (TC 2.A.1.2.22) subfamily.

Its subcellular location is the cell inner membrane. Its function is as follows. Confers resistance to chloramphenicol. The protein is Multidrug resistance protein MdtL of Escherichia coli (strain SMS-3-5 / SECEC).